The following is a 137-amino-acid chain: Basic phospholipase A2 homolog 2 (137 aa).

A signal peptide spans 1–16; sequence MRTLWIMAVLLVGVEG. Cystine bridges form between Cys-42/Cys-131, Cys-44/Cys-60, Cys-59/Cys-111, Cys-65/Cys-137, Cys-66/Cys-104, Cys-73/Cys-97, and Cys-91/Cys-102. Residues 121 to 133 are important for membrane-damaging activities in eukaryotes and bacteria; heparin-binding; the sequence is KKYRYYLKPLCKK.

It belongs to the phospholipase A2 family. Group II subfamily. K49 sub-subfamily. In terms of assembly, homodimer; non-covalently linked. Binds to heparin. It binds long-chain fatty acids covalently by a rapid, spontaneous, and autocatalytic process. When acylated, it binds to the surface of liposomes and isolated muscle membranes, with the fatty acid moiety inserted into the lipid bilayer and possibly acting as an anchor. Expressed by the venom gland.

The protein localises to the secreted. Its activity is regulated as follows. Heparin inhibits the myotoxic activity. Suramin inhibits the myotoxic activity. High level of membrane cholesterol content reduces cytolytic activity, whereas low level of membrane cholesterol content increases cytolytic activity. Functionally, snake venom phospholipase A2 homolog that lacks enzymatic activity. Is myotoxic and induces a dose-dependent edema in the mouse foot pad. Also exhibits strong anticoagulant effects by binding to factor Xa (F10) and inhibiting the prothrombinase activity (IC(50) is 3 nM). In addition, it shows cytotoxic activity to a variety of cell types and bactericidal activity to a variety of Gram-negative and Gram-positive bacteria. Also induces a very rapid release of large amounts of potassium ions and ATP from muscle cells, which accounts for the pain reaction characteristic of viperid envenomations. The released ATP amplifies the effect of the myotoxins, acting as a 'danger signal', which spreads and causes further damage by acting on purinergic receptors. A model of myotoxic mechanism has been proposed: an apo Lys49-PLA2 is activated by the entrance of a hydrophobic molecule (e.g. fatty acid) at the hydrophobic channel of the protein leading to a reorientation of a monomer. This reorientation causes a transition between 'inactive' to 'active' states, causing alignment of C-terminal and membrane-docking sites (MDoS) side-by-side and putting the membrane-disruption sites (MDiS) in the same plane, exposed to solvent and in a symmetric position for both monomers. The MDoS region stabilizes the toxin on membrane by the interaction of charged residues with phospholipid head groups. Subsequently, the MDiS region destabilizes the membrane with penetration of hydrophobic residues. This insertion causes a disorganization of the membrane, allowing an uncontrolled influx of ions (i.e. calcium and sodium), and eventually triggering irreversible intracellular alterations and cell death. The chain is Basic phospholipase A2 homolog 2 from Bothrops asper (Terciopelo).